The chain runs to 165 residues: ATP synthase subunit delta, mitochondrial (165 aa).

The transit peptide at 1–27 directs the protein to the mitochondrion; it reads MNSLRIARAALRVRPTAVRAPLQRRGY.

This sequence belongs to the ATPase epsilon chain family. As to quaternary structure, F-type ATPases have 2 components, CF(1) - the catalytic core - and CF(0) - the membrane proton channel. CF(1) has five subunits: alpha(3), beta(3), gamma(1), delta(1), epsilon(1). CF(0) has three main subunits: a, b and c.

It localises to the mitochondrion. It is found in the mitochondrion inner membrane. Its function is as follows. Mitochondrial membrane ATP synthase (F(1)F(0) ATP synthase or Complex V) produces ATP from ADP in the presence of a proton gradient across the membrane which is generated by electron transport complexes of the respiratory chain. F-type ATPases consist of two structural domains, F(1) - containing the extramembraneous catalytic core, and F(0) - containing the membrane proton channel, linked together by a central stalk and a peripheral stalk. During catalysis, ATP turnover in the catalytic domain of F(1) is coupled via a rotary mechanism of the central stalk subunits to proton translocation. Part of the complex F(1) domain and of the central stalk which is part of the complex rotary element. Rotation of the central stalk against the surrounding alpha(3)beta(3) subunits leads to hydrolysis of ATP in three separate catalytic sites on the beta subunits. In Neurospora crassa (strain ATCC 24698 / 74-OR23-1A / CBS 708.71 / DSM 1257 / FGSC 987), this protein is ATP synthase subunit delta, mitochondrial (des).